We begin with the raw amino-acid sequence, 88 residues long: Long neurotoxin 20 (88 aa).

Residues 1-21 (MKTLLLTLVVVTIVCLDLGNS) form the signal peptide. 5 disulfide bridges follow: Cys-24–Cys-42, Cys-35–Cys-63, Cys-48–Cys-52, Cys-67–Cys-78, and Cys-79–Cys-84.

This sequence belongs to the three-finger toxin family. Long-chain subfamily. Type II alpha-neurotoxin sub-subfamily. Expressed by the venom gland.

The protein localises to the secreted. Binds with high affinity to muscular (alpha-1/CHRNA1) and neuronal (alpha-7/CHRNA7) nicotinic acetylcholine receptor (nAChR) and inhibits acetylcholine from binding to the receptor, thereby impairing neuromuscular and neuronal transmission. The protein is Long neurotoxin 20 of Drysdalia coronoides (White-lipped snake).